The sequence spans 535 residues: T-complex protein 1 subunit zeta 2 (535 aa).

It belongs to the TCP-1 chaperonin family. Heterooligomeric complex of about 850 to 900 kDa that forms two stacked rings, 12 to 16 nm in diameter.

It is found in the cytoplasm. Its function is as follows. Molecular chaperone; assists the folding of proteins upon ATP hydrolysis. Known to play a role, in vitro, in the folding of actin and tubulin. In Arabidopsis thaliana (Mouse-ear cress), this protein is T-complex protein 1 subunit zeta 2.